The primary structure comprises 609 residues: Aspartate--tRNA(Asp/Asn) ligase (609 aa).

Glutamate 177 contacts L-aspartate. The tract at residues 201 to 204 (QLFK) is aspartate. Residue arginine 223 participates in L-aspartate binding. ATP contacts are provided by residues 223–225 (RDE) and glutamine 232. Histidine 461 is a binding site for L-aspartate. Glutamate 499 serves as a coordination point for ATP. Residue arginine 506 participates in L-aspartate binding. 551 to 554 (GVDR) is a binding site for ATP.

Belongs to the class-II aminoacyl-tRNA synthetase family. Type 1 subfamily. In terms of assembly, homodimer.

The protein localises to the cytoplasm. It catalyses the reaction tRNA(Asx) + L-aspartate + ATP = L-aspartyl-tRNA(Asx) + AMP + diphosphate. Aspartyl-tRNA synthetase with relaxed tRNA specificity since it is able to aspartylate not only its cognate tRNA(Asp) but also tRNA(Asn). Reaction proceeds in two steps: L-aspartate is first activated by ATP to form Asp-AMP and then transferred to the acceptor end of tRNA(Asp/Asn). This is Aspartate--tRNA(Asp/Asn) ligase from Synechococcus sp. (strain CC9605).